The primary structure comprises 552 residues: Chaperonin GroEL (552 aa).

Residues threonine 30 to proline 33, lysine 51, aspartate 87 to threonine 91, glycine 415, asparagine 480 to alanine 482, and aspartate 496 contribute to the ATP site.

This sequence belongs to the chaperonin (HSP60) family. As to quaternary structure, forms a cylinder of 14 subunits composed of two heptameric rings stacked back-to-back. Interacts with the co-chaperonin GroES.

It localises to the cytoplasm. The catalysed reaction is ATP + H2O + a folded polypeptide = ADP + phosphate + an unfolded polypeptide.. In terms of biological role, together with its co-chaperonin GroES, plays an essential role in assisting protein folding. The GroEL-GroES system forms a nano-cage that allows encapsulation of the non-native substrate proteins and provides a physical environment optimized to promote and accelerate protein folding. The polypeptide is Chaperonin GroEL (Coxiella burnetii (strain RSA 331 / Henzerling II)).